The sequence spans 573 residues: Excitatory amino acid transporter 2 (573 aa).

The span at M1–P11 shows a compositional bias: polar residues. A disordered region spans residues M1 to K29. At M1 to N44 the chain is on the cytoplasmic side. S3, S21, S24, and S25 each carry phosphoserine. The span at V14–K29 shows a compositional bias: basic and acidic residues. Residue C38 is the site of S-palmitoyl cysteine attachment. A run of 3 helical transmembrane segments spans residues L45–L64, M88–L108, and M121–I142. N-linked (GlcNAc...) asparagine glycans are attached at residues N205 and N215. A run of 3 helical transmembrane segments spans residues F235–M258, F268–I295, and I317–V338. The segment at residues F344–L374 is an intramembrane region (discontinuously helical). A361–S363 contacts L-aspartate. Residues V384 to F410 form a helical membrane-spanning segment. The Na(+) site is built by G392, T394, and N396. Residues T400, I441 to G445, D474, and N481 contribute to the L-aspartate site. The segment at residues I424 to G457 is an intramembrane region (discontinuously helical). A helical membrane pass occupies residues W471 to V492. Residues N481 and D485 each contribute to the Na(+) site. S505, S520, S531, and S533 each carry phosphoserine. Y538 bears the Phosphotyrosine mark. Phosphoserine occurs at positions 543, 559, and 563.

It belongs to the dicarboxylate/amino acid:cation symporter (DAACS) (TC 2.A.23) family. SLC1A2 subfamily. Homotrimer. Interacts with AJUBA. In terms of processing, glycosylated. Post-translationally, palmitoylation at Cys-38 is not required for correct subcellular localization, but is important for glutamate uptake activity. As to expression, localized in brain and is highly enriched in the Purkinje cell layer in cerebellum.

The protein resides in the cell membrane. The catalysed reaction is K(+)(in) + L-glutamate(out) + 3 Na(+)(out) + H(+)(out) = K(+)(out) + L-glutamate(in) + 3 Na(+)(in) + H(+)(in). The enzyme catalyses D-aspartate(out) + K(+)(in) + 3 Na(+)(out) + H(+)(out) = D-aspartate(in) + K(+)(out) + 3 Na(+)(in) + H(+)(in). It carries out the reaction K(+)(in) + L-aspartate(out) + 3 Na(+)(out) + H(+)(out) = K(+)(out) + L-aspartate(in) + 3 Na(+)(in) + H(+)(in). In terms of biological role, sodium-dependent, high-affinity amino acid transporter that mediates the uptake of L-glutamate and also L-aspartate and D-aspartate. Functions as a symporter that transports one amino acid molecule together with two or three Na(+) ions and one proton, in parallel with the counter-transport of one K(+) ion. Mediates Cl(-) flux that is not coupled to amino acid transport; this avoids the accumulation of negative charges due to aspartate and Na(+) symport. Essential for the rapid removal of released glutamate from the synaptic cleft, and for terminating the postsynaptic action of glutamate. This Rattus norvegicus (Rat) protein is Excitatory amino acid transporter 2 (Slc1a2).